Here is a 246-residue protein sequence, read N- to C-terminus: Myogenic factor 5 (246 aa).

Positions 1–38 (RVRARIPGLSSPEGEFPEDFEPRELPPFGAPAPTEPAC) are disordered. The region spanning 73 to 124 (DRRKAATMRERRRLKKVNQAFETLKRCTTANPNQRLPKVEILRNAIRYIESL) is the bHLH domain. Positions 210-246 (EEPGLPLRHAGSLSPGASIDSGARTPGSPPPRTYQAL) are disordered. The span at 236–246 (GSPPPRTYQAL) shows a compositional bias: pro residues.

Efficient DNA binding requires dimerization with another bHLH protein.

The protein localises to the nucleus. Acts as a transcriptional activator that promotes transcription of muscle-specific target genes and plays a role in muscle differentiation. Induces fibroblasts to differentiate into myoblasts. Probable sequence specific DNA-binding protein. In Coturnix japonica (Japanese quail), this protein is Myogenic factor 5 (MYF5).